A 74-amino-acid chain; its full sequence is Translation initiation factor IF-1, chloroplastic (74 aa).

The 72-residue stretch at 1-72 (MEKQNIIEME…TKGRITYRLR (72 aa)) folds into the S1-like domain.

Belongs to the IF-1 family. As to quaternary structure, component of the 30S ribosomal translation pre-initiation complex which assembles on the 30S ribosome in the order IF-2 and IF-3, IF-1 and N-formylmethionyl-tRNA(fMet); mRNA recruitment can occur at any time during PIC assembly.

Its subcellular location is the plastid. It localises to the chloroplast. In terms of biological role, one of the essential components for the initiation of protein synthesis. Stabilizes the binding of IF-2 and IF-3 on the 30S subunit to which N-formylmethionyl-tRNA(fMet) subsequently binds. Helps modulate mRNA selection, yielding the 30S pre-initiation complex (PIC). Upon addition of the 50S ribosomal subunit IF-1, IF-2 and IF-3 are released leaving the mature 70S translation initiation complex. This is Translation initiation factor IF-1, chloroplastic from Chlorokybus atmophyticus (Soil alga).